The following is a 435-amino-acid chain: MKRVSQMTALAMALGLACASSWAAELAKPLTLDQLQQQNGKAIDTRPSAFYNGWPQTLNGPSGHELAALNLSASWLDKMSTEQLNAWIKQHNLKTDAPVALYGNDKDVDAVKTRLQKAGLTHISILSDALSEPSRLQKLPHFEQLVYPQWLHDLQQGKEVTAKPAGDWKVIEAAWGAPKLYLISHIPGADYIDTNEVESEPLWNKVSDEQLKAMLAKHGIRHDTTVILYGRDVYAAARVAQIMLYAGVKDVRLLDGGWQTWSDAGLPVERGTPPKVKAEPDFGVKIPAQPQLMLDMEQARGLLHRQDASLVSIRSWPEFIGTTSGYSYIKPKGEIAGARWGHAGSDSTHMEDFHNPDGTMRSADDITAMWKAWNIKPEQQVSFYCGTGWRASETFMYARAMGWKNVSVYDGGWYEWSSDPKNPVATGERGPDSSK.

Residues 1–23 (MKRVSQMTALAMALGLACASSWA) form the signal peptide. Rhodanese domains lie at 36 to 138 (QQQN…RLQK), 164 to 270 (PAGD…PVER), and 304 to 425 (HRQD…NPVA). Residue Cys385 is the Cysteine persulfide intermediate of the active site. Substrate is bound at residue Arg390.

As to quaternary structure, monomer.

It is found in the periplasm. It catalyses the reaction thiosulfate + hydrogen cyanide = thiocyanate + sulfite + 2 H(+). In Escherichia coli (strain K12), this protein is Thiosulfate sulfurtransferase YnjE (ynjE).